The primary structure comprises 151 residues: UPF0756 membrane protein GWCH70_2680 (151 aa).

Helical transmembrane passes span 5 to 25 (ILFL…SLMI), 53 to 73 (WGVT…EIGF), 86 to 106 (WIAL…VTLL), and 116 to 136 (LVFG…GPLI).

The protein belongs to the UPF0756 family.

Its subcellular location is the cell membrane. This chain is UPF0756 membrane protein GWCH70_2680, found in Geobacillus sp. (strain WCH70).